The following is a 539-amino-acid chain: O-phosphoserine--tRNA(Cys) ligase (539 aa).

Residues 188–190, 233–235, 275–276, and Asn-319 each bind substrate; these read HMT, SAS, and YY.

Belongs to the class-II aminoacyl-tRNA synthetase family. O-phosphoseryl-tRNA(Cys) synthetase subfamily. In terms of assembly, homotetramer. Interacts with SepCysS.

It carries out the reaction tRNA(Cys) + O-phospho-L-serine + ATP = O-phospho-L-seryl-tRNA(Cys) + AMP + diphosphate. In terms of biological role, catalyzes the attachment of O-phosphoserine (Sep) to tRNA(Cys). This Methanocaldococcus jannaschii (strain ATCC 43067 / DSM 2661 / JAL-1 / JCM 10045 / NBRC 100440) (Methanococcus jannaschii) protein is O-phosphoserine--tRNA(Cys) ligase (sepS).